The sequence spans 290 residues: MDKLIKTISASGAFRAYVLDCTETVRYAQERHHTLSSSTVALGRTLIANQILAANQKGDSKVTVKVIGDSSFGHIISVADTKGHVKGYIQNPGVDIKKTATGEVLVGPFMGQGHFVTITDYGTGNPYTSTTPLITGEIGEDLAYYLTESEQTPSAVGLNVLLDQEDKVKVAGGFMLQVLPGASVEEISHYEKRIQEMPAISTLLASENHIDALLAAIYGEEPYKRLAEEQLSFQCDCSRERFASALMSLPKADLLTMLNEDKGAEIVCQFCGTKYQFDQTDLEVLINDKA.

2 disulfide bridges follow: cysteine 235–cysteine 237 and cysteine 268–cysteine 271.

It belongs to the HSP33 family. Under oxidizing conditions two disulfide bonds are formed involving the reactive cysteines. Under reducing conditions zinc is bound to the reactive cysteines and the protein is inactive.

It localises to the cytoplasm. In terms of biological role, redox regulated molecular chaperone. Protects both thermally unfolding and oxidatively damaged proteins from irreversible aggregation. Plays an important role in the bacterial defense system toward oxidative stress. This Streptococcus equi subsp. equi (strain 4047) protein is 33 kDa chaperonin.